A 182-amino-acid chain; its full sequence is Type-1 fimbrial protein, A chain (182 aa).

The signal sequence occupies residues 1–23; the sequence is MKIKTLAIVVLSALSLSSTAALA. A disulfide bridge links C44 with C84.

Belongs to the fimbrial protein family.

Its subcellular location is the fimbrium. Functionally, fimbriae (also called pili), polar filaments radiating from the surface of the bacterium to a length of 0.5-1.5 micrometers and numbering 100-300 per cell, enable bacteria to colonize the epithelium of specific host organs. The polypeptide is Type-1 fimbrial protein, A chain (fimA) (Escherichia coli (strain K12)).